A 302-amino-acid chain; its full sequence is Arginase (302 aa).

Mn(2+) is bound by residues His-103, Asp-126, His-128, and Asp-130. Substrate contacts are provided by residues 128-132 (HGDLN), 139-141 (SGN), and Asp-180. Asp-229 and Asp-231 together coordinate Mn(2+). Substrate-binding residues include Thr-243 and Glu-274.

It belongs to the arginase family. Requires Mn(2+) as cofactor.

The enzyme catalyses L-arginine + H2O = urea + L-ornithine. The protein operates within nitrogen metabolism; urea cycle; L-ornithine and urea from L-arginine: step 1/1. The polypeptide is Arginase (arg) (Staphylococcus aureus (strain COL)).